The primary structure comprises 662 residues: UvrABC system protein B (662 aa).

In terms of domain architecture, Helicase ATP-binding spans 25-414; that stretch reads AGLNSKKRSQ…GTVVELIIRP (390 aa). 38-45 contacts ATP; sequence GITGSGKT. A Beta-hairpin motif is present at residues 91 to 114; sequence YYDYYQPEAYIVRTDTFIEKDSSI. In terms of domain architecture, Helicase C-terminal spans 430–592; it reads QVEDLISEIQ…IIPKTINSAI (163 aa). Residues 622-657 form the UVR domain; the sequence is KSYMDKLKKEMFKAASNLEFEQAAKLRNQLKTLEKA.

Belongs to the UvrB family. Forms a heterotetramer with UvrA during the search for lesions. Interacts with UvrC in an incision complex.

It localises to the cytoplasm. Its function is as follows. The UvrABC repair system catalyzes the recognition and processing of DNA lesions. A damage recognition complex composed of 2 UvrA and 2 UvrB subunits scans DNA for abnormalities. Upon binding of the UvrA(2)B(2) complex to a putative damaged site, the DNA wraps around one UvrB monomer. DNA wrap is dependent on ATP binding by UvrB and probably causes local melting of the DNA helix, facilitating insertion of UvrB beta-hairpin between the DNA strands. Then UvrB probes one DNA strand for the presence of a lesion. If a lesion is found the UvrA subunits dissociate and the UvrB-DNA preincision complex is formed. This complex is subsequently bound by UvrC and the second UvrB is released. If no lesion is found, the DNA wraps around the other UvrB subunit that will check the other stand for damage. This chain is UvrABC system protein B, found in Rickettsia typhi (strain ATCC VR-144 / Wilmington).